Reading from the N-terminus, the 149-residue chain is uncharacterized protein (149 aa).

Residues 16-128 enclose the HotDog ACOT-type domain; sequence PAGEPAIRVI…LFTFVAIDED (113 aa).

Belongs to the acyl coenzyme A hydrolase family.

This is an uncharacterized protein from Zymomonas mobilis subsp. mobilis (strain ATCC 31821 / ZM4 / CP4).